The sequence spans 75 residues: Putative antitoxin VapB29 (75 aa).

Its function is as follows. Possibly the antitoxic component of a type II toxin-antitoxin (TA) system. Its cognate toxin is VapC29 (Potential). This is Putative antitoxin VapB29 (vapB29) from Mycobacterium tuberculosis (strain CDC 1551 / Oshkosh).